The chain runs to 107 residues: UPF0060 membrane protein mll7841 (107 aa).

Transmembrane regions (helical) follow at residues 4–24 (LFYT…WAWW), 30–50 (PLWL…LALV), 60–80 (AAYG…VEGV), and 87–107 (LAGA…PRGA).

The protein belongs to the UPF0060 family.

Its subcellular location is the cell inner membrane. This Mesorhizobium japonicum (strain LMG 29417 / CECT 9101 / MAFF 303099) (Mesorhizobium loti (strain MAFF 303099)) protein is UPF0060 membrane protein mll7841.